Consider the following 189-residue polypeptide: Interferon alpha-13 (189 aa).

The signal sequence occupies residues 1–23 (MARPCAFLMVLVVLSYWSACSLG). Disulfide bonds link cysteine 24–cysteine 122 and cysteine 52–cysteine 162. N-linked (GlcNAc...) asparagine glycosylation is found at asparagine 94 and asparagine 101.

Belongs to the alpha/beta interferon family.

The protein resides in the secreted. Its function is as follows. Exhibits antiviral activity against Theiler's virus, Mengo virus and vesicular stomatitis virus. Interferons alpha stimulate the production of two enzymes: a protein kinase and an oligoadenylate synthetase. The polypeptide is Interferon alpha-13 (Ifna13) (Mus musculus (Mouse)).